The following is a 256-amino-acid chain: Undecaprenyl-diphosphatase (256 aa).

A run of 7 helical transmembrane segments spans residues 1–21, 41–61, 69–89, 96–116, 172–192, 207–227, and 233–253; these read MDIF…FLPV, FHKT…LALF, VDIW…GFLL, LFAP…FLVL, VAAE…TGYD, ALGV…KGFL, and FNFV…LFYL.

The protein belongs to the UppP family.

The protein resides in the cell inner membrane. It catalyses the reaction di-trans,octa-cis-undecaprenyl diphosphate + H2O = di-trans,octa-cis-undecaprenyl phosphate + phosphate + H(+). Catalyzes the dephosphorylation of undecaprenyl diphosphate (UPP). Confers resistance to bacitracin. The chain is Undecaprenyl-diphosphatase from Wolinella succinogenes (strain ATCC 29543 / DSM 1740 / CCUG 13145 / JCM 31913 / LMG 7466 / NCTC 11488 / FDC 602W) (Vibrio succinogenes).